We begin with the raw amino-acid sequence, 191 residues long: MREIYRQTIHLVFGVLIAFSVLIFKKQLIIPLIVSIVIGICLYFLCKRYYIPIVSDLLNLCKREKEDGKGAIYFAIGMLISLILIDDIKAVFFGILVFAVGDSLATIIGIRGKLKIKYFGKTVEGFLAFFISASLILYPFYGTYGIFVALISAFIEFVSKKIRIDDNLYLPFIVAFIINHQINICSLMNFI.

6 consecutive transmembrane segments (helical) span residues 4–24 (IYRQTIHLVFGVLIAFSVLIF), 26–46 (KQLIIPLIVSIVIGICLYFLC), 68–88 (GKGAIYFAIGMLISLILIDDI), 90–110 (AVFFGILVFAVGDSLATIIGI), 135–155 (LILYPFYGTYGIFVALISAFI), and 168–188 (LYLPFIVAFIINHQINICSLM).

The protein resides in the cell membrane. This is an uncharacterized protein from Methanocaldococcus jannaschii (strain ATCC 43067 / DSM 2661 / JAL-1 / JCM 10045 / NBRC 100440) (Methanococcus jannaschii).